Reading from the N-terminus, the 349-residue chain is Flagellar P-ring protein (349 aa).

Residues 1–16 form the signal peptide; that stretch reads MKYFFIIALLLSSLYS.

It belongs to the FlgI family. In terms of assembly, the basal body constitutes a major portion of the flagellar organelle and consists of four rings (L,P,S, and M) mounted on a central rod.

Its subcellular location is the periplasm. The protein localises to the bacterial flagellum basal body. In terms of biological role, assembles around the rod to form the L-ring and probably protects the motor/basal body from shearing forces during rotation. The chain is Flagellar P-ring protein from Aliarcobacter butzleri (strain RM4018) (Arcobacter butzleri).